The primary structure comprises 169 residues: Translationally-controlled tumor protein homolog (169 aa).

A TCTP domain is found at 1–169 (MIIYKDIVSG…FKDGLEEEKF (169 aa)).

The protein belongs to the TCTP family.

It is found in the cytoplasm. Its function is as follows. Involved in calcium binding and microtubule stabilization. The protein is Translationally-controlled tumor protein homolog of Branchiostoma belcheri (Amphioxus).